The sequence spans 327 residues: Lipoyl synthase (327 aa).

[4Fe-4S] cluster contacts are provided by cysteine 74, cysteine 79, cysteine 85, cysteine 100, cysteine 104, cysteine 107, and serine 314. In terms of domain architecture, Radical SAM core spans 86 to 303 (FSGGTATFMI…AEEGERMGFK (218 aa)).

Belongs to the radical SAM superfamily. Lipoyl synthase family. It depends on [4Fe-4S] cluster as a cofactor.

The protein resides in the cytoplasm. The catalysed reaction is [[Fe-S] cluster scaffold protein carrying a second [4Fe-4S](2+) cluster] + N(6)-octanoyl-L-lysyl-[protein] + 2 oxidized [2Fe-2S]-[ferredoxin] + 2 S-adenosyl-L-methionine + 4 H(+) = [[Fe-S] cluster scaffold protein] + N(6)-[(R)-dihydrolipoyl]-L-lysyl-[protein] + 4 Fe(3+) + 2 hydrogen sulfide + 2 5'-deoxyadenosine + 2 L-methionine + 2 reduced [2Fe-2S]-[ferredoxin]. Its pathway is protein modification; protein lipoylation via endogenous pathway; protein N(6)-(lipoyl)lysine from octanoyl-[acyl-carrier-protein]: step 2/2. Catalyzes the radical-mediated insertion of two sulfur atoms into the C-6 and C-8 positions of the octanoyl moiety bound to the lipoyl domains of lipoate-dependent enzymes, thereby converting the octanoylated domains into lipoylated derivatives. The sequence is that of Lipoyl synthase from Pseudomonas paraeruginosa (strain DSM 24068 / PA7) (Pseudomonas aeruginosa (strain PA7)).